Here is a 607-residue protein sequence, read N- to C-terminus: MAKNYGDVYHVEGWGEPYFAVNKDGHLCVRIYGRETLPGQEIDVLSVIEQATSADGTGKKLQFPMILRFPDVLRHRINSLHTAFANAIKYTQYGSVYQGVFPVKVNQHKDVVQDMVHFGYDHSYGLEAGSKPELLIAMSCLTKAKPGAYLVCNGYKDSAYVALALAARAMGLNVIIVLEMEEELDIVIEESSKLGVEPVIGVRAKLLTKIPGHFGSTAGKHGKFGLPAEKIYEVAKKLKALNKLHWLKLLHFHVGSMIPTTDIVFKAASEASDIYCALVKEYGVETMTTLDCGGGLGVDYDGTRSGSSDMSVAYGLEEYASSIVQAVRLKCDYHGVPHPVLCTESGRAMASYHSMIILEALSAIPEPKDDEDEATTEQLHGRIRDLSSKLQPTGLSMSSHAVHIKKHGIEMYKLGKKLSKSVTTDAHTIYNYHMNLSVFSLMPDYWGIQHLFPMMPVSRLDEKPTHKATLVDVTCDSDGKVDKFIRDTETMPLHPLDPKLGGYYVAVLLTGAYQEALSNKHNLFGGPSLVRVVGTGNGGAFNVEAALLGSTTEELIGTVSYDVKQDISSVIEERARENKVWEMVEKLVESGLHTMPYLADYKPPPMA.

Position 104 is an N6-(pyridoxal phosphate)lysine (lysine 104). 290-300 provides a ligand contact to substrate; sequence LDCGGGLGVDY.

It belongs to the Orn/Lys/Arg decarboxylase class-II family. SpeA subfamily. It depends on pyridoxal 5'-phosphate as a cofactor. Requires Mg(2+) as cofactor.

It carries out the reaction L-arginine + H(+) = agmatine + CO2. The protein operates within amine and polyamine biosynthesis; agmatine biosynthesis; agmatine from L-arginine: step 1/1. The chain is Arginine decarboxylase (SPE1) from Avena sativa (Oat).